Reading from the N-terminus, the 305-residue chain is Olfactory receptor 9G19 (305 aa).

Over 1–24 the chain is Extracellular; sequence MDQNNNTVSEFIMLGFTTDPVIQK. A helical membrane pass occupies residues 25–45; it reads VLFAVFLVVYTLTLMGNSSLI. Residues 46–55 lie on the Cytoplasmic side of the membrane; it reads MLICNDSRLH. Residues 56 to 76 form a helical membrane-spanning segment; it reads TPMYFFIGNLSFLDLGLSSVY. Over 77-96 the chain is Extracellular; sequence TPKILETCISEDKSISFAGC. Cys-96 and Cys-178 are oxidised to a cystine. The helical transmembrane segment at 97 to 117 threads the bilayer; the sequence is VAQFFFSAALDYTECYLLAAM. Residues 118–138 lie on the Cytoplasmic side of the membrane; the sequence is AYDRYVAISKPLLYSQAMSLK. Residues 139–159 form a helical membrane-spanning segment; that stretch reads LCVCFVVASYVGGFINSVIIT. The Extracellular segment spans residues 160-204; the sequence is KDTFALTFCNDNVIDDFFCDIPPLVKLACGKKKSFQSVLFFLLTS. Residues 205 to 225 form a helical membrane-spanning segment; sequence NVIIPIVFILATYLFIIATIL. The Cytoplasmic portion of the chain corresponds to 226–236; the sequence is RIRSTQGRLKA. Residues 237 to 257 traverse the membrane as a helical segment; the sequence is FSTCSSHLISVTLYYGSILYI. Residues 258 to 270 are Extracellular-facing; it reads YARPRSSYSLDRD. Residues 271 to 291 form a helical membrane-spanning segment; that stretch reads KIVSTFYTVVFPMLNPLIYSL. The Cytoplasmic segment spans residues 292 to 305; the sequence is RNKDVKEALNKLLK.

It belongs to the G-protein coupled receptor 1 family.

The protein localises to the cell membrane. Odorant receptor. This chain is Olfactory receptor 9G19, found in Mus musculus (Mouse).